Reading from the N-terminus, the 254-residue chain is Uridine-cytidine kinase 1 (254 aa).

A disordered region spans residues 1–29 (MASAGGDECEGAAPEADRPHQRPFLIGVS). 30 to 38 (GGTASGKST) serves as a coordination point for ATP. Substrate contacts are provided by Asp87, Tyr115, His120, Arg146, Arg155, and Gln163. Asp192 serves as a coordination point for ATP. Residues 224–254 (SYKRTFSEPGDHPGMLTSGKRSHLESSSRPH) form a disordered region. A Phosphothreonine modification is found at Thr228. Phosphoserine is present on Ser230. The segment covering 245–254 (SHLESSSRPH) has biased composition (basic and acidic residues).

Belongs to the uridine kinase family.

It carries out the reaction uridine + ATP = UMP + ADP + H(+). It catalyses the reaction cytidine + ATP = CMP + ADP + H(+). The protein operates within pyrimidine metabolism; CTP biosynthesis via salvage pathway; CTP from cytidine: step 1/3. It functions in the pathway pyrimidine metabolism; UMP biosynthesis via salvage pathway; UMP from uridine: step 1/1. Phosphorylates uridine and cytidine to uridine monophosphate and cytidine monophosphate. Does not phosphorylate deoxyribonucleosides or purine ribonucleosides. Can use ATP or GTP as a phosphate donor. This chain is Uridine-cytidine kinase 1 (UCK1), found in Macaca fascicularis (Crab-eating macaque).